A 515-amino-acid polypeptide reads, in one-letter code: Cytochrome P450 705A22 (515 aa).

Residues 9–29 traverse the membrane as a helical segment; that stretch reads FQNCFIFILIFLLTFLCFFFF. Cys454 contributes to the heme binding site.

It belongs to the cytochrome P450 family. The cofactor is heme.

It localises to the membrane. Functionally, plays a role in the gravitropic response of the inflorescence stems and roots. May affect the synthesis of flavonols that have a role in regulating auxin transport. The polypeptide is Cytochrome P450 705A22 (Arabidopsis thaliana (Mouse-ear cress)).